The chain runs to 273 residues: Ribosomal RNA small subunit methyltransferase A (273 aa).

Asn-18, Leu-20, Gly-45, Glu-66, Asp-91, and Asn-113 together coordinate S-adenosyl-L-methionine.

It belongs to the class I-like SAM-binding methyltransferase superfamily. rRNA adenine N(6)-methyltransferase family. RsmA subfamily.

The protein localises to the cytoplasm. It carries out the reaction adenosine(1518)/adenosine(1519) in 16S rRNA + 4 S-adenosyl-L-methionine = N(6)-dimethyladenosine(1518)/N(6)-dimethyladenosine(1519) in 16S rRNA + 4 S-adenosyl-L-homocysteine + 4 H(+). In terms of biological role, specifically dimethylates two adjacent adenosines (A1518 and A1519) in the loop of a conserved hairpin near the 3'-end of 16S rRNA in the 30S particle. May play a critical role in biogenesis of 30S subunits. The sequence is that of Ribosomal RNA small subunit methyltransferase A from Salmonella typhimurium (strain LT2 / SGSC1412 / ATCC 700720).